An 84-amino-acid polypeptide reads, in one-letter code: Small ribosomal subunit protein uS15 (84 aa).

Belongs to the universal ribosomal protein uS15 family. As to quaternary structure, part of the 30S ribosomal subunit. Forms a bridge to the 50S subunit in the 70S ribosome, contacting the 23S rRNA.

Its function is as follows. One of the primary rRNA binding proteins, it binds directly to 16S rRNA where it helps nucleate assembly of the platform of the 30S subunit by binding and bridging several RNA helices of the 16S rRNA. Functionally, forms an intersubunit bridge (bridge B4) with the 23S rRNA of the 50S subunit in the ribosome. The protein is Small ribosomal subunit protein uS15 of Thermosipho africanus (strain TCF52B).